Reading from the N-terminus, the 82-residue chain is Small ribosomal subunit protein uS17 (82 aa).

This sequence belongs to the universal ribosomal protein uS17 family. In terms of assembly, part of the 30S ribosomal subunit.

One of the primary rRNA binding proteins, it binds specifically to the 5'-end of 16S ribosomal RNA. The sequence is that of Small ribosomal subunit protein uS17 from Azorhizobium caulinodans (strain ATCC 43989 / DSM 5975 / JCM 20966 / LMG 6465 / NBRC 14845 / NCIMB 13405 / ORS 571).